The chain runs to 175 residues: MLEESKNALRVFITGNPGVGKTTILLFLINKLSENNYKVAGFYCPEVRENGRRIGFRIVDITTNEGDWLAKENAPGRVKIGKYTVLEDSAKRITEITLSNINKADVLAIDEIGPMELKIPTIKKLIETILNNQKPLIAVLHRTQKPMGGRIYVITVENRDSIKYEILNYILSSLD.

Residues 15-22 and 106-113 each bind ATP; these read GNPGVGKT and VLAIDEIG.

It belongs to the THEP1 NTPase family.

The enzyme catalyses a ribonucleoside 5'-triphosphate + H2O = a ribonucleoside 5'-diphosphate + phosphate + H(+). In terms of biological role, has nucleotide phosphatase activity towards ATP, GTP, CTP, TTP and UTP. May hydrolyze nucleoside diphosphates with lower efficiency. The sequence is that of Nucleoside-triphosphatase THEP1 from Saccharolobus solfataricus (strain ATCC 35092 / DSM 1617 / JCM 11322 / P2) (Sulfolobus solfataricus).